The following is a 575-amino-acid chain: Transcription factor collier (575 aa).

Residues 79–82 are interaction with DNA; sequence RKSN. The segment at 167–186 adopts a C5-type zinc-finger fold; that stretch reads CRVLLTHEVMCSRCCDKKSC. 2 interaction with DNA regions span residues 213 to 220 and 252 to 255; these read NCLKNAGN and NNSK. Residues 255-278 are disordered; it reads KHGRRAKRLDTTEGTGNTSLSISG. Residues 266 to 276 are compositionally biased toward polar residues; sequence TEGTGNTSLSI. Positions 299–382 constitute an IPT/TIG domain; the sequence is PCIKAISPSE…KGSPGRFVYV (84 aa). Disordered stretches follow at residues 456–492 and 546–575; these read GQWTEDDYQRAQSSSVSPRGGYCSSASTPHSSGGSYG and AATAHPHHHYPHPHQPWHNPAVSAATAAAV. A compositionally biased stretch (low complexity) spans 479 to 492; sequence SSASTPHSSGGSYG. Residues 546-557 are compositionally biased toward basic residues; that stretch reads AATAHPHHHYPH. Over residues 561-575 the composition is skewed to low complexity; the sequence is PWHNPAVSAATAAAV.

The protein belongs to the COE family. Its expression at the blastoderm stage is restricted to a single stripe of cells corresponding to part of the intercalary and mandibular segment primordia, possibly parasegment O.

The protein localises to the nucleus. May act as a 'second-level regulator' of head patterning. Required for establishment of the PS(-1)/PS0 parasegmental border and formation of the intercalary segment. Required for expression of the segment polarity genes hedgehog, engrailed and wingless, and the segment-identity genes CAP and collar in the intercalary segment. Required at the onset of the gastrulation for the correct formation of the mandibular segment. In Drosophila melanogaster (Fruit fly), this protein is Transcription factor collier (kn).